Consider the following 349-residue polypeptide: Small ribosomal subunit protein uS2 (349 aa).

Belongs to the universal ribosomal protein uS2 family.

This Methylobacterium nodulans (strain LMG 21967 / CNCM I-2342 / ORS 2060) protein is Small ribosomal subunit protein uS2.